Consider the following 402-residue polypeptide: Serine/threonine transporter SstT (402 aa).

The next 8 membrane-spanning stretches (helical) occupy residues 17 to 37 (IAIGVVIGAILGLLIPKITVI), 44 to 64 (FVGGLKAIAPLLVSALVANAL), 78 to 98 (IIVLYLFGTFAAALTAVISHY), 138 to 158 (ALSQANYIGVLLWAVVFGFAM), 179 to 199 (IVRWIINLAPFGILGLVFDTI), 212 to 232 (VLILVLVGTMTFVALVINPII), 295 to 315 (MAGAAVTINVLTLAAVTTLGI), and 336 to 356 (ASGIAGGSLLLVPVACSLFGI).

This sequence belongs to the dicarboxylate/amino acid:cation symporter (DAACS) (TC 2.A.23) family.

The protein resides in the cell membrane. It catalyses the reaction L-serine(in) + Na(+)(in) = L-serine(out) + Na(+)(out). It carries out the reaction L-threonine(in) + Na(+)(in) = L-threonine(out) + Na(+)(out). In terms of biological role, involved in the import of serine and threonine into the cell, with the concomitant import of sodium (symport system). The protein is Serine/threonine transporter SstT of Streptococcus thermophilus (strain CNRZ 1066).